Consider the following 422-residue polypeptide: Phytoene synthase, chloroplastic (422 aa).

Residues 1–83 (MSLASSLVVS…GSVIVASMVA (83 aa)) constitute a chloroplast transit peptide.

It belongs to the phytoene/squalene synthase family. In terms of assembly, monomer.

The protein resides in the plastid. Its subcellular location is the chloroplast. The catalysed reaction is 2 (2E,6E,10E)-geranylgeranyl diphosphate = 15-cis-phytoene + 2 diphosphate. The protein operates within carotenoid biosynthesis; phytoene biosynthesis; all-trans-phytoene from geranylgeranyl diphosphate: step 1/1. Its function is as follows. Catalyzes the reaction from prephytoene diphosphate to phytoene. The chain is Phytoene synthase, chloroplastic (PSY) from Cucumis melo (Muskmelon).